The primary structure comprises 318 residues: MAIEKKFVNDGYVKASMDEYFAEQLSRAGYGGMELNRTPMGTQIVIYSEKPGMVIGKAGKVIRKLTRDVANKYSLENPQIDAQEVKRPELNAQMMASRLAASIERGWYFRKAGHNTLRAVMNAGALGCEVVISGKLTGARSRVEKFVDGYIKHSGNPVEEVVDEGFAVAVKKLGTLGCKVRIIQPGVVLPDSYKVRESVEVEEPAEKPAEKPAEKPAEKAAAPKKEAAKARAPAPAPEAPAPAPEAPAPAPVEEAEVAEPEEAEEVQAETSEEIEGAELVYVEGSDEVRRQVNGVWQHKHGSYDYWHPMARVHKEAKE.

One can recognise a KH type-2 domain in the interval M17–K86. Over residues S198–K229 the composition is skewed to basic and acidic residues. Residues S198–E275 form a disordered region. Positions A234–A250 are enriched in pro residues. Positions E253–E275 are enriched in acidic residues.

The protein belongs to the universal ribosomal protein uS3 family. In terms of assembly, part of the 30S ribosomal subunit.

Binds the lower part of the 30S subunit head. In Methanosarcina acetivorans (strain ATCC 35395 / DSM 2834 / JCM 12185 / C2A), this protein is Small ribosomal subunit protein uS3.